Reading from the N-terminus, the 161-residue chain is Small ribosomal subunit protein uS9 (161 aa).

Polar residues predominate over residues 1–21 (MATLQSLADLNRANTQTSNPE). The disordered stretch occupies residues 1–25 (MATLQSLADLNRANTQTSNPENEAP).

It belongs to the universal ribosomal protein uS9 family.

The polypeptide is Small ribosomal subunit protein uS9 (Methylorubrum populi (strain ATCC BAA-705 / NCIMB 13946 / BJ001) (Methylobacterium populi)).